A 406-amino-acid chain; its full sequence is MSQPITRENFDEWMIPVYAPAPFIPVRGEGSRLWDQQGKEYIDFAGGIAVNALGHAHPELREALNEQASKFWHTGNGYTNESVLRLAKKLIDATFADRVFFCNSGAEANEAALKLARKFAHDRYGSHKSGIVAFKNAFHGRTLFTVSAGGQPAYSQDFAPLPPDIRHAAYNDINSASALIDDSTCAVIVEPIQGEGGVVPASNAFLQGLRELCDRHNALLIFDEVQTGVGRTGELYAYMHYGVTPDLLTTAKALGGGFPVGALLATEECASVMTVGTHGTTYGGNPLASAVAGKVLELINTPEMLNGVKQRHDWFVERLNIINHRYGLFNEVRGLGLLIGCVLNADYAGQAKQISQEAAKAGVMVLIAGGNVVRFAPALNVSEEEVTTGLDRFAVACEHFVSRGSS.

An N6-(pyridoxal phosphate)lysine modification is found at lysine 252.

Belongs to the class-III pyridoxal-phosphate-dependent aminotransferase family. AstC subfamily. It depends on pyridoxal 5'-phosphate as a cofactor.

The enzyme catalyses N(2)-succinyl-L-ornithine + 2-oxoglutarate = N-succinyl-L-glutamate 5-semialdehyde + L-glutamate. Its pathway is amino-acid degradation; L-arginine degradation via AST pathway; L-glutamate and succinate from L-arginine: step 3/5. Catalyzes the transamination of N(2)-succinylornithine and alpha-ketoglutarate into N(2)-succinylglutamate semialdehyde and glutamate. Can also act as an acetylornithine aminotransferase. The sequence is that of Succinylornithine transaminase from Escherichia coli O157:H7.